The chain runs to 262 residues: Sulfite reductase, dissimilatory-type subunit beta (262 aa).

[4Fe-4S] cluster-binding residues include C151, C188, C189, C193, C231, C258, and C261. C193 serves as a coordination point for siroheme.

In terms of assembly, heterohexamer of two alpha, two beta and two gamma subunits. The cofactor is [4Fe-4S] cluster. Siroheme is required as a cofactor.

It carries out the reaction [DsrC protein]-trisulfide + NAD(+) + 3 H2O = [DsrC protein]-dithiol + sulfite + NADH + 3 H(+). Functionally, catalyzes the reduction of sulfite to sulfide. This is the terminal oxidation reaction in sulfate respiration, a process catalyzed by the sulfate-reducing bacteria. The sequence is that of Sulfite reductase, dissimilatory-type subunit beta (dsrB) from Megalodesulfovibrio gigas (strain ATCC 19364 / DSM 1382 / NCIMB 9332 / VKM B-1759) (Desulfovibrio gigas).